We begin with the raw amino-acid sequence, 311 residues long: Cytosolic Fe-S cluster assembly factor Nubp1 homolog (311 aa).

A disordered region spans residues 1–21 (MQAPPPEHCPGVESEDAGKGS). [4Fe-4S] cluster contacts are provided by cysteine 9, cysteine 23, cysteine 26, and cysteine 32. An ATP-binding site is contributed by 63-70 (GKGGVGKS). Positions 240 and 243 each coordinate [4Fe-4S] cluster.

This sequence belongs to the Mrp/NBP35 ATP-binding proteins family. NUBP1/NBP35 subfamily. In terms of assembly, heterotetramer of 2 Nubp1 and 2 Nubp2 chains. [4Fe-4S] cluster is required as a cofactor.

The protein resides in the cytoplasm. Its function is as follows. Component of the cytosolic iron-sulfur (Fe/S) protein assembly (CIA) machinery. Required for maturation of extramitochondrial Fe-S proteins. The Nubp1-Nubp2 heterotetramer forms a Fe-S scaffold complex, mediating the de novo assembly of an Fe-S cluster and its transfer to target apoproteins. This is Cytosolic Fe-S cluster assembly factor Nubp1 homolog from Drosophila sechellia (Fruit fly).